The following is a 462-amino-acid chain: Integrator complex subunit 12 (462 aa).

Residues 39-132 (LARGIDSSYR…PETRSSPITV (94 aa)) are disordered. The span at 59 to 86 (ISSTKTVSVKQEPKTSSSLPSGNNNGKV) shows a compositional bias: polar residues. Lysine 68 participates in a covalent cross-link: Glycyl lysine isopeptide (Lys-Gly) (interchain with G-Cter in SUMO2). Over residues 88 to 125 (TTEKVKKEGEKRPADKMKSDITEGADVPKKPRLEKPET) the composition is skewed to basic and acidic residues. Phosphoserine is present on serine 128. A PHD-type zinc finger spans residues 159-215 (GLACVVCRQMTVASGNQLVECQECHNLYHQDCHKPQVTDKEVTDPRLVWYCARCTRQ). Lysine 254 participates in a covalent cross-link: Glycyl lysine isopeptide (Lys-Gly) (interchain with G-Cter in SUMO2). The segment covering 305–328 (PSTAKLSSAAQNNSGKPATSSANQ) has biased composition (polar residues). Positions 305–462 (PSTAKLSSAA…KKAAQKKLKK (158 aa)) are disordered. Low complexity-rich tracts occupy residues 347–358 (KIGSSNSTSPTV) and 382–431 (VSKV…PSAS). A compositionally biased stretch (polar residues) spans 434–443 (GPTSQESQLN). Residues 449 to 462 (QMVKKKAAQKKLKK) show a composition bias toward basic residues.

Belongs to the Integrator subunit 12 family. As to quaternary structure, component of the Integrator complex, composed of core subunits INTS1, INTS2, INTS3, INTS4, INTS5, INTS6, INTS7, INTS8, INTS9/RC74, INTS10, INTS11/CPSF3L, INTS12, INTS13, INTS14 and INTS15. The core complex associates with protein phosphatase 2A subunits PPP2CA and PPP2R1A, to form the Integrator-PP2A (INTAC) complex. Post-translationally, dephosphorylated at Ser-128 by the PNUTS-PP1 complex, promoting RNA polymerase II transcription pause-release.

Its subcellular location is the nucleus. Component of the integrator complex, a multiprotein complex that terminates RNA polymerase II (Pol II) transcription in the promoter-proximal region of genes. The integrator complex provides a quality checkpoint during transcription elongation by driving premature transcription termination of transcripts that are unfavorably configured for transcriptional elongation: the complex terminates transcription by (1) catalyzing dephosphorylation of the C-terminal domain (CTD) of Pol II subunit POLR2A/RPB1 and SUPT5H/SPT5, (2) degrading the exiting nascent RNA transcript via endonuclease activity and (3) promoting the release of Pol II from bound DNA. The integrator complex is also involved in terminating the synthesis of non-coding Pol II transcripts, such as enhancer RNAs (eRNAs), small nuclear RNAs (snRNAs), telomerase RNAs and long non-coding RNAs (lncRNAs). Mediates recruitment of cytoplasmic dynein to the nuclear envelope, probably as component of the integrator complex. In Bos taurus (Bovine), this protein is Integrator complex subunit 12 (INTS12).